The chain runs to 276 residues: Rhomboid protease GlpG (276 aa).

The next 6 helical transmembrane spans lie at Val-96–Ala-116, Ala-142–Gly-162, Leu-169–Gln-189, Phe-192–Trp-212, Leu-229–Met-249, and Ala-250–Val-270. Ser-201 functions as the Nucleophile in the catalytic mechanism. The active site involves His-254.

It belongs to the peptidase S54 family.

The protein resides in the cell inner membrane. It catalyses the reaction Cleaves type-1 transmembrane domains using a catalytic dyad composed of serine and histidine that are contributed by different transmembrane domains.. Its function is as follows. Rhomboid-type serine protease that catalyzes intramembrane proteolysis. In Citrobacter koseri (strain ATCC BAA-895 / CDC 4225-83 / SGSC4696), this protein is Rhomboid protease GlpG.